The primary structure comprises 596 residues: Transketolase-like protein 1 (596 aa).

Histidine 46 contributes to the substrate binding site. Residues serine 49 and 94 to 96 contribute to the thiamine diphosphate site; that span reads GWL. Aspartate 126 lines the Mg(2+) pocket. The thiamine diphosphate site is built by glycine 127 and asparagine 156. Asparagine 156 and leucine 158 together coordinate Mg(2+). Thiamine diphosphate is bound by residues lysine 218 and histidine 232. Substrate contacts are provided by histidine 232, arginine 292, and serine 319. Positions 340 and 366 each coordinate thiamine diphosphate. The active-site Proton donor is the glutamate 340. 2 residues coordinate substrate: histidine 390 and aspartate 398. Residue glutamine 402 coordinates thiamine diphosphate. Arginine 448 is a binding site for substrate.

This sequence belongs to the transketolase family. Homodimer. The cofactor is Mg(2+). Requires Ca(2+) as cofactor. Mn(2+) serves as cofactor. Co(2+) is required as a cofactor. It depends on thiamine diphosphate as a cofactor.

It localises to the cytoplasm. The enzyme catalyses D-sedoheptulose 7-phosphate + D-glyceraldehyde 3-phosphate = aldehydo-D-ribose 5-phosphate + D-xylulose 5-phosphate. Its function is as follows. Catalyzes the transfer of a two-carbon ketol group from a ketose donor to an aldose acceptor, via a covalent intermediate with the cofactor thiamine pyrophosphate. In Macaca fascicularis (Crab-eating macaque), this protein is Transketolase-like protein 1 (TKTL1).